The following is a 338-amino-acid chain: Ketol-acid reductoisomerase (NADP(+)) (338 aa).

A KARI N-terminal Rossmann domain is found at 1–181 (MQVYYDKDCD…GGGRTGIIET (181 aa)). NADP(+) is bound by residues 24 to 27 (FGSQ), Arg-47, Ser-50, Ser-52, and 82 to 85 (DEFQ). The active site involves His-107. Residue Gly-133 coordinates NADP(+). The 146-residue stretch at 182–327 (TFRDECETDL…RKLRAMMPWI (146 aa)) folds into the KARI C-terminal knotted domain. Residues Asp-190, Glu-194, Glu-226, and Glu-230 each contribute to the Mg(2+) site. Ser-251 contacts substrate.

This sequence belongs to the ketol-acid reductoisomerase family. It depends on Mg(2+) as a cofactor.

It carries out the reaction (2R)-2,3-dihydroxy-3-methylbutanoate + NADP(+) = (2S)-2-acetolactate + NADPH + H(+). The enzyme catalyses (2R,3R)-2,3-dihydroxy-3-methylpentanoate + NADP(+) = (S)-2-ethyl-2-hydroxy-3-oxobutanoate + NADPH + H(+). Its pathway is amino-acid biosynthesis; L-isoleucine biosynthesis; L-isoleucine from 2-oxobutanoate: step 2/4. The protein operates within amino-acid biosynthesis; L-valine biosynthesis; L-valine from pyruvate: step 2/4. Involved in the biosynthesis of branched-chain amino acids (BCAA). Catalyzes an alkyl-migration followed by a ketol-acid reduction of (S)-2-acetolactate (S2AL) to yield (R)-2,3-dihydroxy-isovalerate. In the isomerase reaction, S2AL is rearranged via a Mg-dependent methyl migration to produce 3-hydroxy-3-methyl-2-ketobutyrate (HMKB). In the reductase reaction, this 2-ketoacid undergoes a metal-dependent reduction by NADPH to yield (R)-2,3-dihydroxy-isovalerate. The chain is Ketol-acid reductoisomerase (NADP(+)) from Hydrogenovibrio crunogenus (strain DSM 25203 / XCL-2) (Thiomicrospira crunogena).